Here is a 128-residue protein sequence, read N- to C-terminus: Ribonuclease P protein component 4 (128 aa).

The Zn(2+) site is built by cysteine 67, cysteine 70, cysteine 96, and cysteine 99.

It belongs to the eukaryotic/archaeal RNase P protein component 4 family. Consists of a catalytic RNA component and at least 4-5 protein subunits. The cofactor is Zn(2+).

It is found in the cytoplasm. It carries out the reaction Endonucleolytic cleavage of RNA, removing 5'-extranucleotides from tRNA precursor.. Its function is as follows. Part of ribonuclease P, a protein complex that generates mature tRNA molecules by cleaving their 5'-ends. This chain is Ribonuclease P protein component 4, found in Methanopyrus kandleri (strain AV19 / DSM 6324 / JCM 9639 / NBRC 100938).